We begin with the raw amino-acid sequence, 873 residues long: Mitogen-activated protein kinase kinase kinase kinase 3 (873 aa).

At M1 the chain carries N-acetylmethionine. One can recognise a Protein kinase domain in the interval 16 to 273 (FELIQRIGSG…AEKLLQHPFV (258 aa)). Residues 22-30 (IGSGTYGDV) and K45 contribute to the ATP site. D136 serves as the catalytic Proton acceptor. Phosphoserine occurs at positions 329 and 377. The tract at residues 389-518 (AHLEDDEGDD…KPISNGLPPT (130 aa)) is disordered. Residues 452–466 (HVPPRPPPPRLPPQK) are compositionally biased toward pro residues. The segment covering 487 to 499 (VHQQQSEQRGTNL) has biased composition (polar residues). The 312-residue stretch at 535 to 846 (PLKIHCATSW…IFRLLGSDRV (312 aa)) folds into the CNH domain.

Belongs to the protein kinase superfamily. STE Ser/Thr protein kinase family. STE20 subfamily. As to quaternary structure, interacts with SH3GL2. Interaction appears to regulate MAP4K3-mediated JNK activation. Mg(2+) serves as cofactor.

It carries out the reaction L-seryl-[protein] + ATP = O-phospho-L-seryl-[protein] + ADP + H(+). The enzyme catalyses L-threonyl-[protein] + ATP = O-phospho-L-threonyl-[protein] + ADP + H(+). Its function is as follows. Serine/threonine kinase that plays a role in the response to environmental stress. Appears to act upstream of the JUN N-terminal pathway. Activator of the Hippo signaling pathway which plays a pivotal role in organ size control and tumor suppression by restricting proliferation and promoting apoptosis. MAP4Ks act in parallel to and are partially redundant with STK3/MST2 and STK4/MST2 in the phosphorylation and activation of LATS1/2, and establish MAP4Ks as components of the expanded Hippo pathway. In Rattus norvegicus (Rat), this protein is Mitogen-activated protein kinase kinase kinase kinase 3 (Map4k3).